We begin with the raw amino-acid sequence, 265 residues long: Short-chain dehydrogenase/reductase GME11373 (265 aa).

Residues I26, D72, N99, and R132 each coordinate NADP(+). Active-site proton donor residues include S148 and S149. 3 residues coordinate NADP(+): Y163, K167, and T198. Residue Y163 is the Proton acceptor of the active site. Residue K167 is the Lowers pKa of active site Tyr of the active site.

It belongs to the short-chain dehydrogenases/reductases (SDR) family.

It functions in the pathway secondary metabolite biosynthesis. In terms of biological role, short-chain dehydrogenase/reductase; part of the gene cluster that mediates the biosynthesis of dibenzodioxocinones such as pestalotiollide B, a novel class of inhibitors against cholesterol ester transfer protein (CEPT). The biosynthesis initiates from condensation of acetate and malonate units catalyzed by the non-reducing PKS pks8/GME11356. Pks8/GME11356 lacks a thioesterase (TE) domain, which is important to the cyclizing of the third ring of atrochrysone carboxylic acid, and the esterase GME11355 might play the role of TE and catalyzes the cyclization reaction of the C ring. The lactamase-like protein GME11357 (or other beta-lactamases in Pestalotiopsis microspora) probably hydrolyzes the thioester bond between the ACP of pks8/GME11356 and the intermediate to release atrochrysone carboxylic acid, which is spontaneously dehydrates to form endocrocin anthrone. Endocrocin anthrone is further converted to emodin via the endocrocin intermediate. Emodin is then oxidized by several enzymes such as the Baeyer-Villiger oxidase GME11358, the oxidoreductase GME11367, the short chain dehydrogenase/reductase GME11373, as well as by other oxidoreductases from the cluster, to modify the A and C rings and open the B ring, and finally yield monodictyphenone. The prenyltransferase GME11375 may catalyze the addition reaction between the C5 side chains and the carbon bone of dibenzodioxocinones. The remaining biochemical reactions to the final product dibenzodioxocinones should be methylation catalyzed by methyltransferase GME11366 and reduction and lactonization reaction catalyzed by a series of oxidordeuctases. This chain is Short-chain dehydrogenase/reductase GME11373, found in Pestalotiopsis microspora.